The sequence spans 353 residues: UPF0283 membrane protein YPA_1696 (353 aa).

A run of 3 helical transmembrane segments spans residues 71 to 91, 101 to 121, and 214 to 234; these read MVTAGMVILGASVIAQSVQWV, IALGATTAGGLIILAGVGSVV, and ESALMIAVSPLALVDMAFIAW.

The protein belongs to the UPF0283 family.

Its subcellular location is the cell inner membrane. The polypeptide is UPF0283 membrane protein YPA_1696 (Yersinia pestis bv. Antiqua (strain Antiqua)).